A 341-amino-acid chain; its full sequence is S-adenosylmethionine:tRNA ribosyltransferase-isomerase (341 aa).

It belongs to the QueA family. As to quaternary structure, monomer.

Its subcellular location is the cytoplasm. The catalysed reaction is 7-aminomethyl-7-carbaguanosine(34) in tRNA + S-adenosyl-L-methionine = epoxyqueuosine(34) in tRNA + adenine + L-methionine + 2 H(+). It functions in the pathway tRNA modification; tRNA-queuosine biosynthesis. In terms of biological role, transfers and isomerizes the ribose moiety from AdoMet to the 7-aminomethyl group of 7-deazaguanine (preQ1-tRNA) to give epoxyqueuosine (oQ-tRNA). The polypeptide is S-adenosylmethionine:tRNA ribosyltransferase-isomerase (Symbiobacterium thermophilum (strain DSM 24528 / JCM 14929 / IAM 14863 / T)).